The chain runs to 331 residues: MSDALINGLAGAGGGIIAQLLTYPLQTVNTRQQTERDLKREKRKLGTIEHMCQVVKQEGWERLYGGLAPSLAGTAASQGVYYYFYQVFRNRAEATALARKKKGLGDGSVGMFASLLVAAFAGSVNVLMTNPIWVIVTRMQTHRKMTKDQTAAPESPSSNAEALVAVEPRPYGTFNTIREVYDEAGITGFWKGVIPTLIMVSNPSMQFMLYETMLTKLKKKRALKGSNNVTALETFLLGAVAKLGATVTTYPLLVVKSRLQAKQVTTGDKRQQYKGTLDAILKMIRYEGLYGFYKGMSTKIVQSVLAAAVLFMIKEELVKGAKLLLSNATSS.

3 Solcar repeats span residues 2-91 (SDAL…FRNR), 109-216 (VGMF…MLTK), and 229-320 (VTAL…LVKG). 6 consecutive transmembrane segments (helical) span residues 5–25 (LING…TYPL), 63–85 (LYGG…YYFY), 116–136 (LVAA…WVIV), 180–200 (VYDE…LIMV), 235–255 (FLLG…LLVV), and 293–313 (YKGM…LFMI).

The protein belongs to the mitochondrial carrier (TC 2.A.29) family. In terms of assembly, homodimer. Expressed in cotyledons, hypocotyls, vascular tissues, trichomes, hydathodes, seeds, pedicels, flowers and stigma.

The protein localises to the glyoxysome membrane. Inhibited by pyridoxal 5'-phosphate, bathophenanthroline, tannic acid, mersalyl, mercuric chloride and bromocresol purple. Its function is as follows. Mediates the NAD(+) import into peroxisomes. Favors the NAD(+)(in)/AMP(out) antiport exchange, but is also able to catalyze a low unidirectional transport that might be essential under special conditions. Transports CoA, dephospho-CoA, acetyl-CoA, adenosine 3',5'-diphosphate (PAP), NAD(+), AMP, ADP and NADH, but has no activity with ATP, GTP, GDP, NADPH, NADP(+) or FAD. Required for peroxisomes proliferation. The chain is Peroxisomal nicotinamide adenine dinucleotide carrier (PXN) from Arabidopsis thaliana (Mouse-ear cress).